A 313-amino-acid chain; its full sequence is Methionyl-tRNA formyltransferase (313 aa).

Residue 112 to 115 (SLLP) coordinates (6S)-5,6,7,8-tetrahydrofolate.

It belongs to the Fmt family.

The catalysed reaction is L-methionyl-tRNA(fMet) + (6R)-10-formyltetrahydrofolate = N-formyl-L-methionyl-tRNA(fMet) + (6S)-5,6,7,8-tetrahydrofolate + H(+). Its function is as follows. Attaches a formyl group to the free amino group of methionyl-tRNA(fMet). The formyl group appears to play a dual role in the initiator identity of N-formylmethionyl-tRNA by promoting its recognition by IF2 and preventing the misappropriation of this tRNA by the elongation apparatus. This chain is Methionyl-tRNA formyltransferase, found in Roseiflexus castenholzii (strain DSM 13941 / HLO8).